The sequence spans 440 residues: Ribosomal protein uS12 methylthiotransferase RimO (440 aa).

Residues 7-117 form the MTTase N-terminal domain; the sequence is PKISFVSLGC…VLDAVHRALP (111 aa). [4Fe-4S] cluster contacts are provided by Cys-16, Cys-52, Cys-81, Cys-148, Cys-152, and Cys-155. A Radical SAM core domain is found at 134-370; that stretch reads LTPRHYAYLK…MARQQKISAQ (237 aa). Positions 373–439 constitute a TRAM domain; the sequence is KRKVGTRQQV…EYDLHGSVAG (67 aa).

This sequence belongs to the methylthiotransferase family. RimO subfamily. [4Fe-4S] cluster serves as cofactor.

Its subcellular location is the cytoplasm. The catalysed reaction is L-aspartate(89)-[ribosomal protein uS12]-hydrogen + (sulfur carrier)-SH + AH2 + 2 S-adenosyl-L-methionine = 3-methylsulfanyl-L-aspartate(89)-[ribosomal protein uS12]-hydrogen + (sulfur carrier)-H + 5'-deoxyadenosine + L-methionine + A + S-adenosyl-L-homocysteine + 2 H(+). Functionally, catalyzes the methylthiolation of an aspartic acid residue of ribosomal protein uS12. The polypeptide is Ribosomal protein uS12 methylthiotransferase RimO (Afipia carboxidovorans (strain ATCC 49405 / DSM 1227 / KCTC 32145 / OM5) (Oligotropha carboxidovorans)).